We begin with the raw amino-acid sequence, 155 residues long: Small ribosomal subunit protein uS7cz/uS7cy (155 aa).

The protein belongs to the universal ribosomal protein uS7 family. Part of the 30S ribosomal subunit.

It localises to the plastid. The protein resides in the chloroplast. One of the primary rRNA binding proteins, it binds directly to 16S rRNA where it nucleates assembly of the head domain of the 30S subunit. The sequence is that of Small ribosomal subunit protein uS7cz/uS7cy (rps7-A) from Calycanthus floridus var. glaucus (Eastern sweetshrub).